Here is a 315-residue protein sequence, read N- to C-terminus: Putative glycosyltransferase ORF315 (315 aa).

It belongs to the glycosyltransferase group 1 family. Glycosyltransferase 4 subfamily.

This is Putative glycosyltransferase ORF315 from Acidianus convivator (ABV).